Reading from the N-terminus, the 379-residue chain is Alanine racemase (379 aa).

Residue Lys-37 is the Proton acceptor; specific for D-alanine of the active site. Lys-37 bears the N6-(pyridoxal phosphate)lysine mark. Arg-137 is a binding site for substrate. Tyr-269 acts as the Proton acceptor; specific for L-alanine in catalysis. Met-317 provides a ligand contact to substrate.

It belongs to the alanine racemase family. The cofactor is pyridoxal 5'-phosphate.

The catalysed reaction is L-alanine = D-alanine. Its pathway is amino-acid biosynthesis; D-alanine biosynthesis; D-alanine from L-alanine: step 1/1. In terms of biological role, catalyzes the interconversion of L-alanine and D-alanine. May also act on other amino acids. In Citrifermentans bemidjiense (strain ATCC BAA-1014 / DSM 16622 / JCM 12645 / Bem) (Geobacter bemidjiensis), this protein is Alanine racemase (alr).